The primary structure comprises 342 residues: Spermidine synthase (342 aa).

Positions 9 to 42 (MKGTELPVKRPREEEAETEMEAANNSNNGCEKEE) are disordered. A PABS domain is found at 52 to 289 (PGWFSEISPL…GMIGFMLCST (238 aa)). Q83 is an S-adenosyl 3-(methylsulfanyl)propylamine binding site. A putrescine-binding site is contributed by Y113. S-adenosyl 3-(methylsulfanyl)propylamine is bound by residues Q114, D138, E158, 189-190 (DG), and D208. D208 functions as the Proton acceptor in the catalytic mechanism. Putrescine-binding positions include 208–211 (DSSD) and Y277.

It belongs to the spermidine/spermine synthase family.

It catalyses the reaction S-adenosyl 3-(methylsulfanyl)propylamine + putrescine = S-methyl-5'-thioadenosine + spermidine + H(+). The protein operates within amine and polyamine biosynthesis; spermidine biosynthesis; spermidine from putrescine: step 1/1. The chain is Spermidine synthase (SPDSYN) from Solanum lycopersicum (Tomato).